Reading from the N-terminus, the 133-residue chain is Putative nickel-responsive regulator (133 aa).

Ni(2+) is bound by residues histidine 74, histidine 85, histidine 87, and cysteine 93.

Belongs to the transcriptional regulatory CopG/NikR family. Ni(2+) serves as cofactor.

Functionally, transcriptional regulator. In Saccharolobus solfataricus (strain ATCC 35092 / DSM 1617 / JCM 11322 / P2) (Sulfolobus solfataricus), this protein is Putative nickel-responsive regulator.